The chain runs to 331 residues: Biotin synthase (331 aa).

Residues 48 to 278 (FDSQKFEFCS…SAELRLCGGR (231 aa)) form the Radical SAM core domain. Residues cysteine 66, cysteine 70, and cysteine 73 each contribute to the [4Fe-4S] cluster site. 4 residues coordinate [2Fe-2S] cluster: cysteine 110, cysteine 143, cysteine 203, and arginine 273.

Belongs to the radical SAM superfamily. Biotin synthase family. In terms of assembly, homodimer. The cofactor is [4Fe-4S] cluster. [2Fe-2S] cluster serves as cofactor.

It catalyses the reaction (4R,5S)-dethiobiotin + (sulfur carrier)-SH + 2 reduced [2Fe-2S]-[ferredoxin] + 2 S-adenosyl-L-methionine = (sulfur carrier)-H + biotin + 2 5'-deoxyadenosine + 2 L-methionine + 2 oxidized [2Fe-2S]-[ferredoxin]. It participates in cofactor biosynthesis; biotin biosynthesis; biotin from 7,8-diaminononanoate: step 2/2. Functionally, catalyzes the conversion of dethiobiotin (DTB) to biotin by the insertion of a sulfur atom into dethiobiotin via a radical-based mechanism. The polypeptide is Biotin synthase (Hydrogenobaculum sp. (strain Y04AAS1)).